A 240-amino-acid polypeptide reads, in one-letter code: Flavin-dependent thymidylate synthase (240 aa).

One can recognise a ThyX domain in the interval 13 to 235 (ITVELVKHSA…PETHAAFEKQ (223 aa)). FAD contacts are provided by residues Ser64, 87 to 89 (RHR), and Glu95. Residues 84–87 (EFMR), 95–99 (EESGR), and Arg167 each bind dUMP. Positions 87-97 (RHRIASYNEES) match the ThyX motif motif. FAD is bound by residues 183-185 (NAR) and Asn189. Position 194 (Arg194) interacts with dUMP. The Involved in ionization of N3 of dUMP, leading to its activation role is filled by Arg194.

It belongs to the thymidylate synthase ThyX family. In terms of assembly, homotetramer. Requires FAD as cofactor.

It catalyses the reaction dUMP + (6R)-5,10-methylene-5,6,7,8-tetrahydrofolate + NADPH + H(+) = dTMP + (6S)-5,6,7,8-tetrahydrofolate + NADP(+). It functions in the pathway pyrimidine metabolism; dTTP biosynthesis. Functionally, catalyzes the reductive methylation of 2'-deoxyuridine-5'-monophosphate (dUMP) to 2'-deoxythymidine-5'-monophosphate (dTMP) while utilizing 5,10-methylenetetrahydrofolate (mTHF) as the methyl donor, and NADPH and FADH(2) as the reductant. This is Flavin-dependent thymidylate synthase from Tropheryma whipplei (strain TW08/27) (Whipple's bacillus).